The chain runs to 31 residues: U1-theraphotoxin-Cv1a (31 aa).

3 cysteine pairs are disulfide-bonded: Cys2/Cys16, Cys9/Cys21, and Cys15/Cys28.

As to expression, expressed by the venom gland.

The protein resides in the secreted. Functionally, insecticidal toxin that induces reversible paralysis in crickets but not in cockroaches and mice. Molecular target unknown. This chain is U1-theraphotoxin-Cv1a, found in Coremiocnemis valida (Singapore tarantula).